The primary structure comprises 149 residues: Calmodulin-1 (149 aa).

4 consecutive EF-hand domains span residues 8–43 (EQIS…LGQN), 44–79 (PTEA…KMKD), 81–116 (DSEE…LGEK), and 117–149 (LTDE…MMAK). Positions 21, 23, 25, 27, 32, 57, 59, 61, 63, 68, 94, 96, 98, 105, 130, 132, 134, 136, and 141 each coordinate Ca(2+).

It belongs to the calmodulin family. Interacts with ZAR1 (via CaMBD domain). Binds to IQD1. Binds to MEE62 in a calcium-dependent manner.

It is found in the cytoplasm. The protein resides in the cell membrane. Its function is as follows. Calmodulin mediates the control of a large number of enzymes, ion channels and other proteins by Ca(2+). Among the enzymes to be stimulated by the calmodulin-Ca(2+) complex are a number of protein kinases and phosphatases. The protein is Calmodulin-1 (CAM1) of Arabidopsis thaliana (Mouse-ear cress).